Reading from the N-terminus, the 589-residue chain is tRNA (guanine(26)-N(2))-dimethyltransferase 2 (589 aa).

The Trm1 methyltransferase domain occupies 9-465; it reads TVIKEGEAEI…APMEVIWDIM (457 aa). Residue Arg-36 coordinates S-adenosyl-L-methionine. The disordered stretch occupies residues 51-122; sequence KQEHEAKSSK…RFAPREPKPP (72 aa). Composition is skewed to basic and acidic residues over residues 68–81 and 106–122; these read VIEK…KEET and DPAK…PKPP. S-adenosyl-L-methionine contacts are provided by Arg-134, Asp-152, and Val-185. Zn(2+) is bound by residues Cys-315, Cys-318, Cys-350, and Cys-353. The tract at residues 550-589 is disordered; it reads LSQHHEELKEEDEEAEPEDNVQDKVDPKRQKTATDNITST. The segment covering 558–569 has biased composition (acidic residues); it reads KEEDEEAEPEDN.

It belongs to the class I-like SAM-binding methyltransferase superfamily. Trm1 family.

The catalysed reaction is guanosine(26) in tRNA + 2 S-adenosyl-L-methionine = N(2)-dimethylguanosine(26) in tRNA + 2 S-adenosyl-L-homocysteine + 2 H(+). Its function is as follows. Dimethylates a single guanine residue at position 26 of most tRNAs using S-adenosyl-L-methionine as donor of the methyl groups. This Arabidopsis thaliana (Mouse-ear cress) protein is tRNA (guanine(26)-N(2))-dimethyltransferase 2.